We begin with the raw amino-acid sequence, 1470 residues long: MFIPNDRPSVLQLPKHEKDSTAADIKSIVANRDRRLIAVATNDAIYIWLANPQLLLCSVGVIDANFKETRGELKEIYWKPDSTSIAVTTNQCKILIYNLDLRDDEQCYNFTDSADPYFQRNSPELFIKGSRPTAHLHPTIIINLADIPTCCVPSRDEFLVCLQNGFTHHVTWTGEIIASLSFRASSIPFSVDQLQSKSENITSKSTYIFDAVYAPLLGGFAIVLSDGQGALLTSNDPNFAPNAILGVWAPNMKDATCCDVNHKFLLILFGCKNGDVCAYNIDELNGSLVQSFRVAPKVTNGPDLTNRLGPVHRITALANGYGFGAIWSPLSGAHALPRLVAVFTSFGAQSFCNLEGVVEEDQNDRYTAIEWGPEGFQLWLGTENELMMQPFVRSASCSSPAMEHCDRAVLMSDSQVLISAARDREAEACAPHSVWDHITVTHEYLSSNWPLRYASTDRNYKHLVVAGDQGMAYCSLSNRRWKIFGNETQEKNLLVTGGVFIWNDDVIGVVGVAADTDKSHLSFYPISQRLDSRYASVVDLEHKSVMSVLRDDVCAVFDISAQITLYKLTAHLETGRDAFTKVSTEIVTVIRINEIVPHPTCIVSLQMTQLNLDVRGKLSPAFYSSIDTVLVNISGRLITLSVNEDGKLHQPMVIASYVEKMWHDRCQVSQSTQSQNQDLPWKNHRRNGSNVSIQSVSTSTTSEPSSPMNQSCSSHLSNALWIACGAKGIKVWMPLVPGKRNLATQEMTFIAKRIMLPFELDIYPIVISAKDCLAMGVESQLQHVARASRNQGQMESITMYGLHRNSEVFVHHLLRQLLKRNLGVFALELAGACRSLPHFTHALELLLHGVLEEEATSSEPIPDPLLPRCVAFIHEFPEFLKTVAHCARKTELALWRTLFDVTGSPNALFEECLQLKQLENAASFVIVLQNLETTEVSMDQAARLVKEALEEKKWTIAKEMVRFARSIGSEDIDAFFRTPPPSAKTSLSRRPTVSSPSADSSTEFVINRFQAGAAGGRLNKVRHSQSTEQKDAPRKDSIGGSSKDKMALSWGLSGELSPQLATNRLAAKMTSILEDHAWHLLNNYWLLDLGFFWSELQFDLLGLLETRRKQISLSPKTTNENCFLIEDFALALTRLHAQFSWPYPLIGSQFVHQIEKKLGNIRVSQSTASLNGLLNDSLDNIKKPKARKLERTVVDLNGARSRIRETDIEASEEDVEIQEAVLERVRGSAVELAPVIDRSPSTSSSMNHHAPLAPPSPSSCDSRSLAGDCYQNTDFLVGEKSSRGNLQSSHQLELLLSLFSQTATIDWIFLFCLLSRDERKLRQEINVSMVRRAGEKSFARVRFACSELSRWAVEKCCGYVALLQAFDAHLAVVAEQAGCADLKFSPDNENRKASQKTSADDPKRGRRRADSGSSKLNNSFSNPKLNGMNGGRRERSRSADRAHKSVKRYDDVVCAEDALEKANEEGCSIM.

3 WD repeats span residues 20–58 (STAA…LLCS), 68–107 (ETRG…DEQC), and 472–512 (AYCS…VVGV). 4 disordered regions span residues 673-710 (QSQN…PMNQ), 975-1001 (FFRT…ADSS), 1017-1045 (RLNK…SKDK), and 1238-1259 (RSPS…SPSS). Over residues 689-707 (SNVSIQSVSTSTTSEPSSP) the composition is skewed to low complexity. Polar residues predominate over residues 983-1001 (AKTSLSRRPTVSSPSADSS). Over residues 1028 to 1045 (EQKDAPRKDSIGGSSKDK) the composition is skewed to basic and acidic residues. Residues 1294 to 1314 (LLLSLFSQTATIDWIFLFCLL) form a helical membrane-spanning segment. Residues 1385–1403 (SPDNENRKASQKTSADDPK) show a composition bias toward basic and acidic residues. A disordered region spans residues 1385-1447 (SPDNENRKAS…SADRAHKSVK (63 aa)). Residues 1411–1424 (SGSSKLNNSFSNPK) show a composition bias toward polar residues. Over residues 1431 to 1447 (GRRERSRSADRAHKSVK) the composition is skewed to basic and acidic residues.

Belongs to the RIC1 family. Component of a guanine nucleotide exchange factor (GEF) complex.

The protein localises to the membrane. Its function is as follows. Probable component of a guanine nucleotide exchange factor (GEF) that may be required for efficient fusion of endosome-derived vesicles with the Golgi. The protein is Guanine nucleotide exchange factor subunit R06F6.8 of Caenorhabditis elegans.